The primary structure comprises 2116 residues: Non-structural polyprotein p200 (2116 aa).

Residues 36–49 (EVRDVVTAAQKRAI) are required for efficient proteolysis and P150-P90 interaction. Residues 57–247 (VFTQMQVSDH…TRPCTTRIYQ (191 aa)) enclose the Alphavirus-like MT domain. Basic and acidic residues predominate over residues 457–467 (GPLEDGGRHLD). Disordered stretches follow at residues 457–477 (GPLEDGGRHLDTVQPPKSPPR) and 712–805 (AGPR…ADPD). Pro residues-rich tracts occupy residues 721–730 (SPPPGDPPPP) and 745–776 (TPPPAPARDPPPPAPSPPAPPRAGDPVPPIPA). 3 consecutive short sequence motifs (pxxPxR; class II SH3-binding) follow at residues 727-732 (PPPPRR), 747-752 (PPAPAR), and 761-766 (PPAPPR). The region spanning 806–985 (SDIVESYARA…LTHASVLVGA (180 aa)) is the Macro domain. Positions 992–1031 (VSPPPTEPLASCPAGDPGRPAQRSASPPATPLGDATAPEP) are disordered. Residues 1000–1301 (LASCPAGDPG…WLAVPLSRGG (302 aa)) enclose the Peptidase C27 domain. Cys-1152 functions as the For cysteine protease activity in the catalytic mechanism. The interaction with host CALM1 stretch occupies residues 1152 to 1183 (CWLRAAANVAQAARACGAYTSAGCPKCAYGRA). Zn(2+) contacts are provided by Cys-1175, Cys-1178, Cys-1227, and His-1273. Residues 1193-1228 (FAALSQRWSASHADASPDGTGDPLDPLMETVGCACS) are EF-hand-like. The active-site For cysteine protease activity is His-1273. In terms of domain architecture, (+)RNA virus helicase ATP-binding spans 1320-1468 (EVRRLGDDAM…VPDRWPTERS (149 aa)). An a ribonucleoside 5'-triphosphate-binding site is contributed by 1352–1359 (MAAGAGKT). A (+)RNA virus helicase C-terminal domain is found at 1469 to 1609 (RHTWRFPDCW…ELKEVPAGID (141 aa)). Residues 1700 to 1900 (YRAGEDGSTL…VELEISAALL (201 aa)) form an involved in P150-P90 interaction region. The RdRp catalytic domain occupies 1870–1981 (TNAIEVDFTE…FLPEGARSAA (112 aa)). The Human RB1 binding motif lies at 1902–1906 (LPCAE).

In terms of assembly, interacts with RNA-directed RNA polymerase p90. Interacts with host CALM1; this interaction is necessary for the protease activity and viral infectivity. Interacts with host C1QBP. Interacts with the capsid protein. Interacts with human RB1/retinoblastoma protein. Interacts with protease/methyltransferase p150. It depends on Zn(2+) as a cofactor. Specific enzymatic cleavage by its own cysteine protease yield mature proteins p150 and p90.

Its subcellular location is the host membrane. The protein resides in the host cytoplasm. It localises to the host perinuclear region. It catalyses the reaction RNA(n) + a ribonucleoside 5'-triphosphate = RNA(n+1) + diphosphate. The catalysed reaction is a ribonucleoside 5'-triphosphate + H2O = a ribonucleoside 5'-diphosphate + phosphate + H(+). It carries out the reaction ATP + H2O = ADP + phosphate + H(+). Its function is as follows. Probable principal replicase for the negative-strand DNA, which replicates the 40S (+) genomic RNA into (-) antigenomic RNA. It cannot replicate the (-) into (+) until cleaved into p150 and p90 mature proteins. Protease that cleaves the precursor polyprotein into two mature products. Together with RNA-directed RNA polymerase p90, replicates the 40S genomic and antigenomic RNA by recognizing replications specific signals. The heterodimer P150/p90 is probably the principal replicase for positive-strand genomic RNA and the 24S subgenomic RNA, which codes for structural proteins. Responsible for the mRNA-capping of the viral mRNAs. This function is necessary since all viral RNAs are synthesized in the cytoplasm, and host capping enzymes are restricted to the nucleus. Forms fibers late in the infection that may be involved in cell-to-cell spread of the virus RNA in the absence of virus particle formation. In terms of biological role, together with protease/methyltransferase p150, replicates the 40S genomic and antigenomic RNA by recognizing replications specific signals. The heterodimer P150/p90 is probably the principal replicase for positive-strand genomic RNA and the 24S subgenomic RNA, which codes for structural proteins. A helicase activity is probably also present. This Rubella virus (strain Therien) (RUBV) protein is Non-structural polyprotein p200.